We begin with the raw amino-acid sequence, 395 residues long: S-adenosylmethionine synthase (395 aa).

An ATP-binding site is contributed by His-12. Residue Asp-14 participates in Mg(2+) binding. Glu-40 contacts K(+). Positions 53 and 96 each coordinate L-methionine. Positions 96–106 (QSKEIADAVNF) are flexible loop. Residues 174 to 176 (DGK), 242 to 243 (RF), Asp-251, 257 to 258 (RK), Ala-274, and Lys-278 contribute to the ATP site. Asp-251 is an L-methionine binding site. Lys-282 contributes to the L-methionine binding site.

The protein belongs to the AdoMet synthase family. As to quaternary structure, homotetramer; dimer of dimers. Mg(2+) serves as cofactor. K(+) is required as a cofactor.

The protein localises to the cytoplasm. The enzyme catalyses L-methionine + ATP + H2O = S-adenosyl-L-methionine + phosphate + diphosphate. It participates in amino-acid biosynthesis; S-adenosyl-L-methionine biosynthesis; S-adenosyl-L-methionine from L-methionine: step 1/1. Functionally, catalyzes the formation of S-adenosylmethionine (AdoMet) from methionine and ATP. The overall synthetic reaction is composed of two sequential steps, AdoMet formation and the subsequent tripolyphosphate hydrolysis which occurs prior to release of AdoMet from the enzyme. The protein is S-adenosylmethionine synthase of Tropheryma whipplei (strain TW08/27) (Whipple's bacillus).